Consider the following 848-residue polypeptide: Heat shock protein 70 homolog lhs1 (848 aa).

Positions 1-21 (MKRSVLTIILFFSCQFWHAFA) are cleaved as a signal peptide. 11 N-linked (GlcNAc...) asparagine glycosylation sites follow: Asn-134, Asn-247, Asn-359, Asn-457, Asn-462, Asn-488, Asn-555, Asn-632, Asn-678, Asn-733, and Asn-817. The tract at residues 784-848 (KLKAKKGASS…QQEIDDSDEL (65 aa)) is disordered. Composition is skewed to polar residues over residues 807–822 (TNDI…TSTQ) and 829–840 (ASVTQRPSSLQQ). The short motif at 845-848 (SDEL) is the Prevents secretion from ER element.

It belongs to the heat shock protein 70 family.

It is found in the endoplasmic reticulum lumen. The catalysed reaction is ATP + H2O = ADP + phosphate + H(+). Chaperone required for protein translocation and folding in the endoplasmic reticulum. This is Heat shock protein 70 homolog lhs1 from Schizosaccharomyces pombe (strain 972 / ATCC 24843) (Fission yeast).